The primary structure comprises 81 residues: Photosystem I iron-sulfur center (81 aa).

4Fe-4S ferredoxin-type domains are found at residues 2–31 and 39–68; these read SHSV…MIPW and IASA…VRVY. 8 residues coordinate [4Fe-4S] cluster: C11, C14, C17, C21, C48, C51, C54, and C58.

In terms of assembly, the eukaryotic PSI reaction center is composed of at least 11 subunits. Requires [4Fe-4S] cluster as cofactor.

It localises to the plastid. Its subcellular location is the chloroplast thylakoid membrane. It catalyses the reaction reduced [plastocyanin] + hnu + oxidized [2Fe-2S]-[ferredoxin] = oxidized [plastocyanin] + reduced [2Fe-2S]-[ferredoxin]. In terms of biological role, apoprotein for the two 4Fe-4S centers FA and FB of photosystem I (PSI); essential for photochemical activity. FB is the terminal electron acceptor of PSI, donating electrons to ferredoxin. The C-terminus interacts with PsaA/B/D and helps assemble the protein into the PSI complex. Required for binding of PsaD and PsaE to PSI. PSI is a plastocyanin-ferredoxin oxidoreductase, converting photonic excitation into a charge separation, which transfers an electron from the donor P700 chlorophyll pair to the spectroscopically characterized acceptors A0, A1, FX, FA and FB in turn. This chain is Photosystem I iron-sulfur center, found in Phaseolus vulgaris (Kidney bean).